Here is a 313-residue protein sequence, read N- to C-terminus: Transcription factor MafB (313 aa).

Disordered stretches follow at residues 51–77 (QPTG…FSPT) and 151–197 (MGLP…VEDR). The segment covering 55 to 76 (SVSSTPISTPCSSVPSSPSFSP) has biased composition (low complexity). The segment covering 154 to 166 (PHHHPHHHQHQHH) has biased composition (basic residues). Over residues 167–192 (QTSPSPSGSSSSSQQLHHQQQHSSSS) the composition is skewed to low complexity. Positions 225–250 (RLKQKRRTLKNRGYAQSCRYKRVQQK) are basic motif. Residues 225-288 (RLKQKRRTLK…DAYKIKCEKL (64 aa)) enclose the bZIP domain. The leucine-zipper stretch occupies residues 253–274 (LEGEKTQLVQQVEQLKQEVSRL). The disordered stretch occupies residues 292 to 313 (NSSNFREAGSTSDNPSSPEFFM).

Belongs to the bZIP family. Maf subfamily. As to quaternary structure, homodimer or heterodimer with other bHLH-Zip transcription factors. Binds DNA as a homodimer or a heterodimer.

The protein localises to the nucleus. In terms of biological role, acts as a transcriptional activator or repressor. Implicated in the regulation of cell-type specific gene expression and play a role in inductive events during lens development. The polypeptide is Transcription factor MafB (mafb) (Xenopus laevis (African clawed frog)).